Reading from the N-terminus, the 493-residue chain is Cobyric acid synthase (493 aa).

The 190-residue stretch at 252 to 441 folds into the GATase cobBQ-type domain; that stretch reads DLKITVIRLP…LHGLLENGPW (190 aa). Catalysis depends on Cys333, which acts as the Nucleophile. Residue His433 is part of the active site.

The protein belongs to the CobB/CobQ family. CobQ subfamily.

Its pathway is cofactor biosynthesis; adenosylcobalamin biosynthesis. Functionally, catalyzes amidations at positions B, D, E, and G on adenosylcobyrinic A,C-diamide. NH(2) groups are provided by glutamine, and one molecule of ATP is hydrogenolyzed for each amidation. The chain is Cobyric acid synthase from Thermosynechococcus vestitus (strain NIES-2133 / IAM M-273 / BP-1).